The following is a 406-amino-acid chain: Histidine--tRNA ligase (406 aa).

It belongs to the class-II aminoacyl-tRNA synthetase family. Homodimer.

It is found in the cytoplasm. The enzyme catalyses tRNA(His) + L-histidine + ATP = L-histidyl-tRNA(His) + AMP + diphosphate + H(+). This chain is Histidine--tRNA ligase, found in Nitratiruptor sp. (strain SB155-2).